The chain runs to 193 residues: Peptidyl-tRNA hydrolase (193 aa).

Residue Tyr-16 coordinates tRNA. The active-site Proton acceptor is the His-21. The tRNA site is built by Tyr-66, Asn-68, and Asn-114.

This sequence belongs to the PTH family. Monomer.

The protein resides in the cytoplasm. The enzyme catalyses an N-acyl-L-alpha-aminoacyl-tRNA + H2O = an N-acyl-L-amino acid + a tRNA + H(+). Its function is as follows. Hydrolyzes ribosome-free peptidyl-tRNAs (with 1 or more amino acids incorporated), which drop off the ribosome during protein synthesis, or as a result of ribosome stalling. In terms of biological role, catalyzes the release of premature peptidyl moieties from peptidyl-tRNA molecules trapped in stalled 50S ribosomal subunits, and thus maintains levels of free tRNAs and 50S ribosomes. The chain is Peptidyl-tRNA hydrolase from Geobacter sulfurreducens (strain ATCC 51573 / DSM 12127 / PCA).